The primary structure comprises 620 residues: Mitochondrial Rho GTPase 2 (620 aa).

Residues 1-594 lie on the Cytoplasmic side of the membrane; it reads MKRDVRILLL…ELHTTSFWLR (594 aa). One can recognise a Miro 1 domain in the interval 2-168; sequence KRDVRILLLG…FYYAQKAVLH (167 aa). 4 residues coordinate GTP: G16, K17, T18, and S19. T18 is a Mg(2+) binding site. Residues P35 and D57 each coordinate Mg(2+). S59 is a binding site for GTP. K96 participates in a covalent cross-link: Glycyl lysine isopeptide (Lys-Gly) (interchain with G-Cter in ubiquitin). Residues N118, K119, D121, A149, and K150 each coordinate GTP. A Glycyl lysine isopeptide (Lys-Gly) (interchain with G-Cter in ubiquitin) cross-link involves residue K119. K164 participates in a covalent cross-link: Glycyl lysine isopeptide (Lys-Gly) (interchain with G-Cter in ubiquitin). 2 consecutive EF-hand domains span residues 184 to 219 and 304 to 339; these read ACAQALTRIFRLSDQDMDQALSDQELNAFQTCCFGH and HGYQFAQRMLEKHDQDRDGALSPAELESLFSVFPGP. Residues D197, D199, D201, E208, D317, D319, D321, and E328 each coordinate Ca(2+). The tract at residues 340 to 364 is disordered; sequence PWGPQLPRHRPHRGRSAAPARVPLP. The Miro 2 domain maps to 415–578; it reads RNVLLCKVLG…FARLATMATF (164 aa). 4 residues coordinate GTP: G427, G429, K430, and S431. Residues S431 and E473 each coordinate Mg(2+). 3 residues coordinate GTP: K527, D529, and C558. Residues 595–617 form a helical; Anchor for type IV membrane protein membrane-spanning segment; it reads VALGAVGAAVAAILSFSLYRVLV. Over 618-620 the chain is Mitochondrial intermembrane; that stretch reads KSR.

This sequence belongs to the mitochondrial Rho GTPase family. In terms of assembly, homodimer. Interacts with the kinesin-binding proteins TRAK1/OIP106 and TRAK2/GRIF1, forming a link between mitochondria and the trafficking apparatus of the microtubules. Interacts with ARMCX3. Found in a complex with KIF5B, OGT, RHOT1 and TRAK1. In terms of processing, ubiquitinated by PRKN in a PINK1-dependent manner, leading to its degradation.

It localises to the mitochondrion outer membrane. It carries out the reaction GTP + H2O = GDP + phosphate + H(+). The catalysed reaction is ATP + H2O = ADP + phosphate + H(+). The enzyme catalyses UTP + H2O = UDP + phosphate + H(+). Its function is as follows. Atypical mitochondrial nucleoside-triphosphatase (NTPase) involved in mitochondrial trafficking. Probably involved in control of anterograde transport of mitochondria and their subcellular distribution. Can hydrolyze GTP, ATP and UTP. This Sus scrofa (Pig) protein is Mitochondrial Rho GTPase 2 (RHOT2).